The sequence spans 509 residues: Coiled-coil domain-containing protein 181 (509 aa).

Disordered stretches follow at residues 27-122 and 287-368; these read INDK…EDEE and LAQV…NEKK. 2 stretches are compositionally biased toward basic and acidic residues: residues 41-58 and 67-82; these read ACKK…KETE and DPDK…RRND. Over residues 319 to 333 the composition is skewed to polar residues; sequence RIQSAGVSPVTSTYC. 2 coiled-coil regions span residues 335–377 and 418–488; these read SPRQ…VFKA and LKKK…RSKQ. Over residues 337-368 the composition is skewed to basic and acidic residues; sequence RQKELQKQLERKRERLKREEEQRKLEEENEKK.

It belongs to the CCDC181 family. Homodimer. Interacts with HOOK1. Interacts with HOOK2. Interacts with HOOK3.

The protein resides in the cytoplasm. It is found in the cytoskeleton. The protein localises to the cell projection. It localises to the cilium. Its subcellular location is the flagellum. Microtubule-binding protein that localizes to the microtubular manchette of elongating spermatids. The chain is Coiled-coil domain-containing protein 181 from Rattus norvegicus (Rat).